A 252-amino-acid polypeptide reads, in one-letter code: Adenosylcobinamide-GDP ribazoletransferase (252 aa).

6 consecutive transmembrane segments (helical) span residues 29-49 (LYWF…LGYV), 50-70 (GSLS…GIVL), 104-124 (VGSF…VAVV), 129-149 (FGLF…QVLL), 166-186 (FVAG…LALL), and 194-214 (FPTM…VGMV).

This sequence belongs to the CobS family. Requires Mg(2+) as cofactor.

The protein resides in the cell inner membrane. The catalysed reaction is alpha-ribazole + adenosylcob(III)inamide-GDP = adenosylcob(III)alamin + GMP + H(+). It catalyses the reaction alpha-ribazole 5'-phosphate + adenosylcob(III)inamide-GDP = adenosylcob(III)alamin 5'-phosphate + GMP + H(+). It functions in the pathway cofactor biosynthesis; adenosylcobalamin biosynthesis; adenosylcobalamin from cob(II)yrinate a,c-diamide: step 7/7. Its function is as follows. Joins adenosylcobinamide-GDP and alpha-ribazole to generate adenosylcobalamin (Ado-cobalamin). Also synthesizes adenosylcobalamin 5'-phosphate from adenosylcobinamide-GDP and alpha-ribazole 5'-phosphate. This is Adenosylcobinamide-GDP ribazoletransferase from Chlorobium chlorochromatii (strain CaD3).